The sequence spans 491 residues: Probable protein phosphatase 2C 6 (491 aa).

Residues 1–16 (MGLCHSKIDKTTRKET) are compositionally biased toward basic and acidic residues. Residues 1–39 (MGLCHSKIDKTTRKETGATSTATTTVERQSSGRLRRPRD) are disordered. Over residues 17–28 (GATSTATTTVER) the composition is skewed to low complexity. The PPM-type phosphatase domain maps to 64–376 (IACLYTQQGK…DDCAVVCLFL (313 aa)). D100, G101, D321, and D367 together coordinate Mn(2+). The interval 391-422 (VNHSHEESTESVTITSSKDADKKEEASTETNE) is disordered.

The protein belongs to the PP2C family. Requires Mg(2+) as cofactor. The cofactor is Mn(2+).

The enzyme catalyses O-phospho-L-seryl-[protein] + H2O = L-seryl-[protein] + phosphate. The catalysed reaction is O-phospho-L-threonyl-[protein] + H2O = L-threonyl-[protein] + phosphate. This is Probable protein phosphatase 2C 6 from Arabidopsis thaliana (Mouse-ear cress).